A 232-amino-acid chain; its full sequence is Large ribosomal subunit protein uL1 (232 aa).

Belongs to the universal ribosomal protein uL1 family. Part of the 50S ribosomal subunit.

Functionally, binds directly to 23S rRNA. The L1 stalk is quite mobile in the ribosome, and is involved in E site tRNA release. Protein L1 is also a translational repressor protein, it controls the translation of the L11 operon by binding to its mRNA. The sequence is that of Large ribosomal subunit protein uL1 from Marinobacter nauticus (strain ATCC 700491 / DSM 11845 / VT8) (Marinobacter aquaeolei).